The chain runs to 404 residues: Phosphoglycerate kinase (404 aa).

Substrate is bound by residues 21 to 23, Arg-36, 59 to 62, Arg-119, and Arg-162; these read DFN and HLGR. ATP contacts are provided by residues Lys-213, Gly-300, Glu-331, and 360-363; that span reads GGDS.

This sequence belongs to the phosphoglycerate kinase family. Monomer.

The protein localises to the cytoplasm. It carries out the reaction (2R)-3-phosphoglycerate + ATP = (2R)-3-phospho-glyceroyl phosphate + ADP. Its pathway is carbohydrate degradation; glycolysis; pyruvate from D-glyceraldehyde 3-phosphate: step 2/5. The chain is Phosphoglycerate kinase from Oenococcus oeni (strain ATCC BAA-331 / PSU-1).